The primary structure comprises 455 residues: Dihydrolipoyllysine-residue succinyltransferase component of 2-oxoglutarate dehydrogenase complex, mitochondrial (455 aa).

A mitochondrion-targeting transit peptide spans 1–68; sequence MLSRSRCVSR…RFFRTTAVCK (68 aa). The Lipoyl-binding domain occupies 71–145; the sequence is VITVKTPAFA…EGGTPLFTLR (75 aa). Serine 82 bears the Phosphoserine mark. N6-lipoyllysine is present on lysine 111. A compositionally biased stretch (low complexity) spans 153–173; sequence KAKPAEAPAAAAPKAEPAVSA. The segment at 153–214 is disordered; that stretch reads KAKPAEAPAA…KPTAAPPVAE (62 aa). Residue lysine 155 is modified to N6-acetyllysine. A compositionally biased stretch (pro residues) spans 174–195; sequence VPPPPAASIPTQMPPVPSPPQP. Residues 221–453 are catalytic; the sequence is LRAEHREKMN…AVEDPRVLLL (233 aa). N6-acetyllysine occurs at positions 269, 274, 275, 279, and 309. Catalysis depends on residues histidine 426 and aspartate 430.

The protein belongs to the 2-oxoacid dehydrogenase family. In terms of assembly, the 2-oxoglutarate dehydrogenase complex is composed of OGDH (2-oxoglutarate dehydrogenase; E1), DLST (dihydrolipoamide succinyltransferase; E2), DLD (dihydrolipoamide dehydrogenase; E3) and the assembly factor KGD4. It contains multiple copies of the three enzymatic components (E1, E2 and E3). In the nucleus, the 2-oxoglutarate dehydrogenase complex associates with KAT2A. Interacts with ABHD11; this interaction maintains the functional lipoylation of the 2-oxoglutarate dehydrogenase complex. (R)-lipoate is required as a cofactor.

The protein resides in the mitochondrion matrix. It is found in the nucleus. It carries out the reaction N(6)-[(R)-dihydrolipoyl]-L-lysyl-[protein] + succinyl-CoA = N(6)-[(R)-S(8)-succinyldihydrolipoyl]-L-lysyl-[protein] + CoA. The protein operates within amino-acid degradation; L-lysine degradation via saccharopine pathway; glutaryl-CoA from L-lysine: step 6/6. It functions in the pathway carbohydrate metabolism; tricarboxylic acid cycle. Dihydrolipoamide succinyltransferase (E2) component of the 2-oxoglutarate dehydrogenase complex. The 2-oxoglutarate dehydrogenase complex catalyzes the overall conversion of 2-oxoglutarate to succinyl-CoA and CO(2). The 2-oxoglutarate dehydrogenase complex is mainly active in the mitochondrion. A fraction of the 2-oxoglutarate dehydrogenase complex also localizes in the nucleus and is required for lysine succinylation of histones: associates with KAT2A on chromatin and provides succinyl-CoA to histone succinyltransferase KAT2A. In Sus scrofa (Pig), this protein is Dihydrolipoyllysine-residue succinyltransferase component of 2-oxoglutarate dehydrogenase complex, mitochondrial.